The chain runs to 330 residues: Serine/threonine-protein phosphatase PP1-alpha catalytic subunit (330 aa).

Residue serine 2 is modified to N-acetylserine. Phosphoserine is present on residues serine 2 and serine 22. 4 residues coordinate Mn(2+): aspartate 64, histidine 66, aspartate 92, and asparagine 124. Catalysis depends on histidine 125, which acts as the Proton donor. Positions 173 and 248 each coordinate Mn(2+). An N6-acetyllysine modification is found at lysine 305. Position 306 is a phosphotyrosine (tyrosine 306). The tract at residues tyrosine 306 to lysine 330 is disordered. The residue at position 320 (threonine 320) is a Phosphothreonine. Serine 325 is subject to Phosphoserine.

This sequence belongs to the PPP phosphatase family. PP-1 subfamily. PP1 comprises a catalytic subunit, PPP1CA, PPP1CB or PPP1CC, which is folded into its native form by inhibitor 2 and glycogen synthetase kinase 3, and then complexed to one or several targeting or regulatory subunits. PPP1R12A, PPP1R12B and PPP1R12C mediate binding to myosin. PPP1R3A (in skeletal muscle), PPP1R3B (in liver), PPP1R3C, PPP1R3D and PPP1R3F (in brain) mediate binding to glycogen. Interacts with PPP1R15A and PPP1R15B; the interactions mediate binding to EIF2S1. Part of a complex containing PPP1R15B, PP1 and NCK1/2. Interacts with PPP1R9A, PPP1R9B and PPP1R7. Interacts with YLPM1. Forms a complex with ILF2, ILF3, YLPM1, KHDRBS1, RBMX and NCOA5. Interacts with NOM1 and PPP1R8. Interacts with PPP1R16B. Interacts with RPSA only in the presence of PPP1R16B. Component of the PNUTS-PP1 phosphatase complex, composed of PPP1R10/PNUTS, TOX4, WDR82, and PPP1CA or PPP1CB or PPP1CC. Interacts with PPP1R10/PNUTS and PPP1R8. Interacts with WDR82 in the presence of PPP1R10/PNUTS. Interacts with PPP1R39. transition from mitosis into interphase. Interacts with TRIM28; the interaction dephosphorylates TRIM28 on 'Ser-824' and forms a complex at the p21 promoter site. Interacts with NEK2. Interacts with PHACTR4; which acts as an activator of PP1 activity. Interacts with FER; this promotes phosphorylation at Thr-320. Interacts with BTBD10. Interacts with KCTD20. Interacts with FOXP3. Interacts with CENPA. Interacts with ATG16L1. Found in a complex with PPP1CA, PPP1CC, SHC1 and PEAK1. Interacts with tensin TNS1. Interacts with SAXO4, PPP1R21, PPP1R26, PPP1R27, PPP1R35, PPP1R36, PPP1R37, SH3RF2, ELFN1 and ELFN2. Interacts with TPRN; the interaction results in inhibition of PPC1A phosphatase activity. Interacts with SKA1 (via C-terminus); the interaction is direct and required for the recruitment of PP1 to the kinetochore. Interacts with the KNL1 complex subunit KNL1; the interaction is direct and mutually exclusive with KNL1 binding to microtubules. Component of the SHOC2-MRAS-PP1c (SMP) complex consisting of SHOC2, GTP-bound M-Ras/MRAS and the catalytic subunit of protein phosphatase 1 (either PPP1CA, PPP1CB or PPP1CC). SHOC2 and PP1c preferably bind M-Ras/MRAS, but they also bind K-Ras/KRAS, N-Ras/NRAS and H-Ras/HRAS; these interactions are GTP-dependent and both SHOC2 and PP1c are required to form a stable complex. Interacts with SHOC2 in the absence of Ras GTPases. Mn(2+) is required as a cofactor. Phosphorylated. Dephosphorylated at Thr-320 in the presence of ionizing radiation.

It is found in the cytoplasm. Its subcellular location is the nucleus. The protein resides in the nucleoplasm. It localises to the nucleolus. It carries out the reaction O-phospho-L-seryl-[protein] + H2O = L-seryl-[protein] + phosphate. It catalyses the reaction O-phospho-L-threonyl-[protein] + H2O = L-threonyl-[protein] + phosphate. In terms of biological role, protein phosphatase that associates with over 200 regulatory proteins to form highly specific holoenzymes which dephosphorylate hundreds of biological targets. Protein phosphatase 1 (PP1) is essential for cell division, transcription elongation, and participates in the regulation of glycogen metabolism, muscle contractility and protein synthesis. Involved in regulation of ionic conductances and long-term synaptic plasticity. May play an important role in dephosphorylating substrates such as the postsynaptic density-associated Ca(2+)/calmodulin dependent protein kinase II. Catalytic component of the PNUTS-PP1 protein phosphatase complex, a protein phosphatase 1 (PP1) complex that promotes RNA polymerase II transcription pause-release, allowing transcription elongation: the PNUTS-PP1 complex mediates the release of RNA polymerase II from promoter-proximal region of genes by catalyzing dephosphorylation of proteins involved in transcription, such as AFF4, CDK9, MEPCE, INTS12, NCBP1, POLR2M/GDOWN1 and SUPT6H. The PNUTS-PP1 complex also regulates transcription termination by mediating dephosphorylation of SUPT5H in termination zones downstream of poly(A) sites, thereby promoting deceleration of RNA polymerase II transcription. PNUTS-PP1 complex is also involved in the response to replication stress by mediating dephosphorylation of POLR2A at 'Ser-5' of the CTD, promoting RNA polymerase II degradation. PNUTS-PP1 also plays a role in the control of chromatin structure and cell cycle progression during the transition from mitosis into interphase. Regulates NEK2 function in terms of kinase activity and centrosome number and splitting, both in the presence and absence of radiation-induced DNA damage. Regulator of neural tube and optic fissure closure, and enteric neural crest cell (ENCCs) migration during development. In balance with CSNK1D and CSNK1E, determines the circadian period length, through the regulation of the speed and rhythmicity of PER1 and PER2 phosphorylation. May dephosphorylate CSNK1D and CSNK1E. Dephosphorylates the 'Ser-418' residue of FOXP3 in regulatory T-cells (Treg) from patients with rheumatoid arthritis, thereby inactivating FOXP3 and rendering Treg cells functionally defective. Dephosphorylates CENPA. Dephosphorylates the 'Ser-139' residue of ATG16L1 causing dissociation of ATG12-ATG5-ATG16L1 complex, thereby inhibiting autophagy. Together with PPP1CC (PP1-gamma subunit), dephosphorylates IFIH1/MDA5 and RIG-I leading to their activation and a functional innate immune response. Core component of the SHOC2-MRAS-PP1c (SMP) holophosphatase complex that regulates the MAPK pathway activation. The SMP complex specifically dephosphorylates the inhibitory phosphorylation at 'Ser-259' of RAF1 kinase, 'Ser-365' of BRAF kinase and 'Ser-214' of ARAF kinase, stimulating their kinase activities. The SMP complex enhances the dephosphorylation activity and substrate specificity of PP1c. The protein is Serine/threonine-protein phosphatase PP1-alpha catalytic subunit (PPP1CA) of Canis lupus familiaris (Dog).